A 71-amino-acid chain; its full sequence is Conotoxin Bu23 (71 aa).

Residues 1 to 21 (MGMRMMVTVFLLGVLATTVVS) form the signal peptide. The propeptide occupies 22-37 (LRSNRASDGRRGIVNK). N70 is subject to Asparagine amide.

It belongs to the conotoxin A superfamily. In terms of processing, contains 3 disulfide bonds. They are not indicated here, since framework IV presents two different connectivities (I-V, II-III, IV-VI and I-III, II-V, IV-VI). As to expression, expressed by the venom duct.

The protein resides in the secreted. The polypeptide is Conotoxin Bu23 (Conus bullatus (Bubble cone)).